Here is a 398-residue protein sequence, read N- to C-terminus: Aldo-keto reductase ausK (398 aa).

D76 lines the NADP(+) pocket. The active-site Proton donor is Y81. H156 is a binding site for substrate. NADP(+) is bound by residues 186–187 (CN), Q212, 241–251 (DALGSGKFQSR), and 317–325 (RKIQHLHDN).

Belongs to the aldo/keto reductase family. Aldo/keto reductase 2 subfamily. As to quaternary structure, homodimer.

The protein operates within secondary metabolite biosynthesis; terpenoid biosynthesis. In terms of biological role, aldo-keto reductase; part of the gene cluster B that mediates the biosynthesis of austinol and dehydroaustinol, two fungal meroterpenoids. The first step of the pathway is the synthesis of 3,5-dimethylorsellinic acid by the polyketide synthase ausA. 3,5-dimethylorsellinic acid is then prenylated by the polyprenyl transferase ausN. Further epoxidation by the FAD-dependent monooxygenase ausM and cyclization by the probable terpene cyclase ausL lead to the formation of protoaustinoid A. Protoaustinoid A is then oxidized to spiro-lactone preaustinoid A3 by the combined action of the FAD-binding monooxygenases ausB and ausC, and the dioxygenase ausE. Acid-catalyzed keto-rearrangement and ring contraction of the tetraketide portion of preaustinoid A3 by ausJ lead to the formation of preaustinoid A4. The aldo-keto reductase ausK, with the help of ausH, is involved in the next step by transforming preaustinoid A4 into isoaustinone which is in turn hydroxylated by the P450 monooxygenase ausI to form austinolide. Finally, the cytochrome P450 monooxygenase ausG modifies austinolide to austinol. Austinol can be further modified to dehydroaustinol which forms a diffusible complex with diorcinol that initiates conidiation. Due to genetic rearrangements of the clusters and the subsequent loss of some enzymes, the end products of the Emericella nidulans austinoid biosynthesis clusters are austinol and dehydroaustinol, even if additional enzymes, such as the O-acetyltransferase ausQ and the cytochrome P450 monooxygenase ausR are still functional. This Emericella nidulans (strain FGSC A4 / ATCC 38163 / CBS 112.46 / NRRL 194 / M139) (Aspergillus nidulans) protein is Aldo-keto reductase ausK.